Here is a 380-residue protein sequence, read N- to C-terminus: Chaperone protein DnaJ (380 aa).

The region spanning 5–70 (DYYEALGVAR…RKRTAYDQFG (66 aa)) is the J domain. A CR-type zinc finger spans residues 137–215 (GTTAKIRIPT…CRGEGRVREH (79 aa)). 8 residues coordinate Zn(2+): Cys-150, Cys-153, Cys-167, Cys-170, Cys-189, Cys-192, Cys-203, and Cys-206. 4 CXXCXGXG motif repeats span residues 150–157 (CKACEGSG), 167–174 (CPTCGGHG), 189–196 (CPRCHGSG), and 203–210 (CSTCRGEG). Residues 222-247 (IPPGVDTGDRIRLTGEGEAGESGGPP) are disordered.

This sequence belongs to the DnaJ family. In terms of assembly, homodimer. Zn(2+) is required as a cofactor.

It localises to the cytoplasm. Participates actively in the response to hyperosmotic and heat shock by preventing the aggregation of stress-denatured proteins and by disaggregating proteins, also in an autonomous, DnaK-independent fashion. Unfolded proteins bind initially to DnaJ; upon interaction with the DnaJ-bound protein, DnaK hydrolyzes its bound ATP, resulting in the formation of a stable complex. GrpE releases ADP from DnaK; ATP binding to DnaK triggers the release of the substrate protein, thus completing the reaction cycle. Several rounds of ATP-dependent interactions between DnaJ, DnaK and GrpE are required for fully efficient folding. Also involved, together with DnaK and GrpE, in the DNA replication of plasmids through activation of initiation proteins. The sequence is that of Chaperone protein DnaJ from Nitrosococcus oceani (strain ATCC 19707 / BCRC 17464 / JCM 30415 / NCIMB 11848 / C-107).